A 458-amino-acid chain; its full sequence is Glutamyl-tRNA reductase (458 aa).

Residues 49–52, Ser111, 116–118, and Gln122 contribute to the substrate site; these read TCNR and ETE. The active-site Nucleophile is Cys50. Residue 191 to 196 participates in NADP(+) binding; that stretch reads GAGKMS. Composition is skewed to basic and acidic residues over residues 426 to 440 and 448 to 458; these read IPKD…KEVE and ERGHHESDFHN. The interval 426–458 is disordered; sequence IPKDGEEHSSSKEVESVTQSSTERGHHESDFHN.

This sequence belongs to the glutamyl-tRNA reductase family. In terms of assembly, homodimer.

The enzyme catalyses (S)-4-amino-5-oxopentanoate + tRNA(Glu) + NADP(+) = L-glutamyl-tRNA(Glu) + NADPH + H(+). It functions in the pathway porphyrin-containing compound metabolism; protoporphyrin-IX biosynthesis; 5-aminolevulinate from L-glutamyl-tRNA(Glu): step 1/2. Its function is as follows. Catalyzes the NADPH-dependent reduction of glutamyl-tRNA(Glu) to glutamate 1-semialdehyde (GSA). The protein is Glutamyl-tRNA reductase of Natranaerobius thermophilus (strain ATCC BAA-1301 / DSM 18059 / JW/NM-WN-LF).